Here is a 206-residue protein sequence, read N- to C-terminus: MSSLDELIQKARMLLSEGHSPGQIADELSLSMETVTWLLTQKKGDTAPKDVHIDWTVVSSNGHLLDGIASLMIERYYCAHPFESVEGQCPSLGSNAIVGIALSGVPLATLIAQKEQMKLAIYHPAKHSSGENPVGSISGNFSQVGGENAIIVDDVITSGRTMHEVVRYLRRHKATPLAIWVLFDKLGIKEVEGVPVYSVFTISRID.

The protein belongs to the purine/pyrimidine phosphoribosyltransferase family. GfcR subfamily.

This chain is Transcriptional regulator GfcR, found in Methanosphaerula palustris (strain ATCC BAA-1556 / DSM 19958 / E1-9c).